The primary structure comprises 398 residues: Signal-regulatory protein beta-1 (398 aa).

The N-terminal stretch at 1 to 29 is a signal peptide; the sequence is MPVPASWPHLPSPFLLMTLLLGRLTGVAG. The Ig-like V-type domain occupies 30-136; it reads EDELQVIQPE…SPDDVEFKSG (107 aa). The Extracellular portion of the chain corresponds to 30-371; that stretch reads EDELQVIQPE…EAALAPTAPL (342 aa). 2 disulfide bridges follow: cysteine 54–cysteine 120 and cysteine 169–cysteine 227. 2 consecutive Ig-like C1-type domains span residues 147-246 and 253-347; these read PSAP…ANLS and PTLE…YALE. 3 N-linked (GlcNAc...) asparagine glycosylation sites follow: asparagine 244, asparagine 269, and asparagine 291. Residues 372–392 traverse the membrane as a helical segment; sequence LVALLLGPKLLLVVGVSAIYI. Over 393–398 the chain is Cytoplasmic; that stretch reads CWKQKA.

Homodimer; disulfide-linked. Interacts with TYROBP. This interaction results in the recruitment of SYK. Post-translationally, N-glycosylated. As to expression, detected in monocytes and dendritic cells.

The protein localises to the cell membrane. Its function is as follows. Immunoglobulin-like cell surface receptor involved in the negative regulation of receptor tyrosine kinase-coupled signaling processes. Also participates in the recruitment of tyrosine kinase SYK. Triggers activation of myeloid cells when associated with TYROBP. The sequence is that of Signal-regulatory protein beta-1 (SIRPB1) from Homo sapiens (Human).